Here is a 204-residue protein sequence, read N- to C-terminus: Peptidyl-tRNA hydrolase (204 aa).

Tyrosine 14 provides a ligand contact to tRNA. Residue histidine 19 is the Proton acceptor of the active site. Residues phenylalanine 64, asparagine 66, and asparagine 112 each coordinate tRNA.

The protein belongs to the PTH family. As to quaternary structure, monomer.

Its subcellular location is the cytoplasm. The enzyme catalyses an N-acyl-L-alpha-aminoacyl-tRNA + H2O = an N-acyl-L-amino acid + a tRNA + H(+). Its function is as follows. Hydrolyzes ribosome-free peptidyl-tRNAs (with 1 or more amino acids incorporated), which drop off the ribosome during protein synthesis, or as a result of ribosome stalling. In terms of biological role, catalyzes the release of premature peptidyl moieties from peptidyl-tRNA molecules trapped in stalled 50S ribosomal subunits, and thus maintains levels of free tRNAs and 50S ribosomes. This chain is Peptidyl-tRNA hydrolase, found in Azorhizobium caulinodans (strain ATCC 43989 / DSM 5975 / JCM 20966 / LMG 6465 / NBRC 14845 / NCIMB 13405 / ORS 571).